A 203-amino-acid polypeptide reads, in one-letter code: Ribosome maturation factor RimP (203 aa).

Positions 179 to 203 (VSSEGEDGGEARQAPKLNPKKPGKK) are disordered.

Belongs to the RimP family.

The protein localises to the cytoplasm. Its function is as follows. Required for maturation of 30S ribosomal subunits. In Gluconobacter oxydans (strain 621H) (Gluconobacter suboxydans), this protein is Ribosome maturation factor RimP.